A 251-amino-acid chain; its full sequence is Chloride intracellular channel protein 5 (251 aa).

The segment at 1–98 is required for insertion into the membrane; that stretch reads MTDSATTNGD…EEFLEETLTP (98 aa). Positions 32–35 match the G-site motif; that stretch reads CPFS. A helical membrane pass occupies residues 34 to 54; the sequence is FSQRLFMILWLKGVVFNVTTV. The 141-residue stretch at 101–241 folds into the GST C-terminal domain; the sequence is YPKLAAKHRE…AADSEIELAY (141 aa).

Belongs to the chloride channel CLIC family. As to quaternary structure, component of a multimeric complex consisting of several cytoskeletal proteins, including actin, ezrin, alpha-actinin, gelsolin, and IQGAP1. Interacts with AKAP9. Interacts with TPRN. TPRN, CLIC5 and PTPQR form concentric rings at the base of stereocilia and may form a complex. Interacts with EZR, MYO6 and RDX; the proteins may work together as a complex to stabilize linkages between the plasma membrane and subjacent actin cytoskeleton at the stereocilium base. In terms of tissue distribution, detected in lung and inner ear. Detected in embryonic cochlea, on microvilli-covered apical surfaces of interdental cells, columnar cells of Kolliker's organ, and on stereocilia of inner and outer hair cells (at protein level). Also detected in the eye, where it localizes to lens fiber cells in the lens epithelium (at protein level).

Its subcellular location is the golgi apparatus. The protein localises to the cytoplasm. The protein resides in the cytoskeleton. It localises to the microtubule organizing center. It is found in the centrosome. Its subcellular location is the cell cortex. The protein localises to the membrane. The protein resides in the apical cell membrane. It localises to the mitochondrion. It is found in the cell projection. Its subcellular location is the stereocilium. The enzyme catalyses Na(+)(in) = Na(+)(out). The catalysed reaction is K(+)(in) = K(+)(out). It carries out the reaction chloride(in) = chloride(out). Inhibited by F-actin. Functionally, in the soluble state, catalyzes glutaredoxin-like thiol disulfide exchange reactions with reduced glutathione as electron donor. Can insert into membranes and form non-selective ion channels almost equally permeable to Na(+), K(+) and Cl(-). Required for normal hearing. Necessary for the formation of stereocilia in the inner ear and normal development of the organ of Corti. Required for the proper localization of PTPRQ and RDX to the stereocilium base during postnatal maturation of hair bundles. Can insert into membranes and form poorly selective ion channels that may also transport chloride ions. Required for the development and/or maintenance of the proper glomerular endothelial cell and podocyte architecture. Plays a role in formation of the lens suture in the eye, which is important for normal optical properties of the lens. This Mus musculus (Mouse) protein is Chloride intracellular channel protein 5 (Clic5).